The primary structure comprises 205 residues: Urease accessory protein UreG (205 aa).

12–19 lines the GTP pocket; it reads GPVGSGKT.

It belongs to the SIMIBI class G3E GTPase family. UreG subfamily. In terms of assembly, homodimer. UreD, UreF and UreG form a complex that acts as a GTP-hydrolysis-dependent molecular chaperone, activating the urease apoprotein by helping to assemble the nickel containing metallocenter of UreC. The UreE protein probably delivers the nickel.

It is found in the cytoplasm. Facilitates the functional incorporation of the urease nickel metallocenter. This process requires GTP hydrolysis, probably effectuated by UreG. In Pseudomonas savastanoi pv. phaseolicola (strain 1448A / Race 6) (Pseudomonas syringae pv. phaseolicola (strain 1448A / Race 6)), this protein is Urease accessory protein UreG.